The primary structure comprises 460 residues: Argininosuccinate lyase (460 aa).

The protein belongs to the lyase 1 family. Argininosuccinate lyase subfamily.

Its subcellular location is the cytoplasm. It catalyses the reaction 2-(N(omega)-L-arginino)succinate = fumarate + L-arginine. It functions in the pathway amino-acid biosynthesis; L-arginine biosynthesis; L-arginine from L-ornithine and carbamoyl phosphate: step 3/3. The polypeptide is Argininosuccinate lyase (Edwardsiella ictaluri (strain 93-146)).